An 89-amino-acid chain; its full sequence is Small ribosomal subunit protein uS15 (89 aa).

It belongs to the universal ribosomal protein uS15 family. In terms of assembly, part of the 30S ribosomal subunit. Forms a bridge to the 50S subunit in the 70S ribosome, contacting the 23S rRNA.

Its function is as follows. One of the primary rRNA binding proteins, it binds directly to 16S rRNA where it helps nucleate assembly of the platform of the 30S subunit by binding and bridging several RNA helices of the 16S rRNA. Functionally, forms an intersubunit bridge (bridge B4) with the 23S rRNA of the 50S subunit in the ribosome. This Trichormus variabilis (strain ATCC 29413 / PCC 7937) (Anabaena variabilis) protein is Small ribosomal subunit protein uS15.